The primary structure comprises 135 residues: VapC ribonuclease aq_1901 (135 aa).

Residues 3-130 (LLDTTVLLDF…FKKLGFKTVN (128 aa)) form the PINc domain. Asp5 is a binding site for Mg(2+).

The protein belongs to the PINc/VapC protein family. Mg(2+) serves as cofactor.

In terms of biological role, toxic component of a type II toxin-antitoxin (TA) system. An RNase. In Aquifex aeolicus (strain VF5), this protein is VapC ribonuclease aq_1901.